A 311-amino-acid polypeptide reads, in one-letter code: Methionyl-tRNA formyltransferase (311 aa).

112–115 contributes to the (6S)-5,6,7,8-tetrahydrofolate binding site; it reads SLLP.

Belongs to the Fmt family.

It carries out the reaction L-methionyl-tRNA(fMet) + (6R)-10-formyltetrahydrofolate = N-formyl-L-methionyl-tRNA(fMet) + (6S)-5,6,7,8-tetrahydrofolate + H(+). Functionally, attaches a formyl group to the free amino group of methionyl-tRNA(fMet). The formyl group appears to play a dual role in the initiator identity of N-formylmethionyl-tRNA by promoting its recognition by IF2 and preventing the misappropriation of this tRNA by the elongation apparatus. The chain is Methionyl-tRNA formyltransferase from Rhizobium meliloti (strain 1021) (Ensifer meliloti).